Here is a 181-residue protein sequence, read N- to C-terminus: Ribulose bisphosphate carboxylase small subunit, chloroplastic 2 (181 aa).

The N-terminal 54 residues, 1-54, are a transit peptide targeting the chloroplast; the sequence is MASSMLSSAAVVTSPAQATMVAPFTGLKSSAAFPVTRKANNDITSIASNGGRVS.

The protein belongs to the RuBisCO small chain family. As to quaternary structure, heterohexadecamer of 8 large and 8 small subunits.

It localises to the plastid. The protein localises to the chloroplast. Its function is as follows. RuBisCO catalyzes two reactions: the carboxylation of D-ribulose 1,5-bisphosphate, the primary event in carbon dioxide fixation, as well as the oxidative fragmentation of the pentose substrate. Both reactions occur simultaneously and in competition at the same active site. Although the small subunit is not catalytic it is essential for maximal activity. This is Ribulose bisphosphate carboxylase small subunit, chloroplastic 2 from Brassica napus (Rape).